The sequence spans 1412 residues: Erbin (1412 aa).

17 LRR repeats span residues 23–44 (TVTT…IFTF), 47–68 (TLEE…LFNC), 70–91 (SLHK…IANL), 93–114 (NLRE…IKNC), 116–137 (VLTI…FSQL), 139–161 (NLTQ…GRLT), 162–183 (KLQI…MNRL), 185–206 (QLER…LEQL), 208–229 (GLKE…IGSL), 231–252 (QLTY…ISTC), 254–275 (NLQD…IGSL), 277–298 (NITT…IGGL), 300–321 (SVEE…IGQL), 323–344 (NLRT…IGSW), 346–367 (NITV…MGDM), 369–391 (KLKV…TKLQ), and 392–413 (QLTA…QKET). Phosphoserine is present on residues S440 and S444. 2 disordered regions span residues 464 to 489 (CDED…PYPD) and 506 to 542 (KDEE…TTTV). A compositionally biased stretch (basic and acidic residues) spans 470–480 (EREAPPREGNL). A Phosphotyrosine modification is found at Y483. T485 bears the Phosphothreonine mark. The span at 506–532 (KDEETNEDSGRDLKPHEDQQDINKDVG) shows a compositional bias: basic and acidic residues. Residues 533–542 (VKTSESTTTV) show a composition bias toward low complexity. A phosphoserine mark is found at S569, S598, S602, S603, and S620. The segment at 615–681 (PLIETSINQP…TDSSQDTSLC (67 aa)) is disordered. Residues 632–641 (NKKDDTKETD) are compositionally biased toward basic and acidic residues. Residues 650-662 (NSNQNNSNCSSPS) are compositionally biased toward low complexity. Residues 663–681 (RMSDSVSLNTDSSQDTSLC) are compositionally biased toward polar residues. S715 carries the phosphoserine modification. The interval 803-867 (ETEHLENGNK…PQKSGPVGSV (65 aa)) is disordered. The span at 817-835 (ESVNKVNGHSEETSQSPNR) shows a compositional bias: polar residues. Phosphoserine occurs at positions 852, 857, and 872. A Phosphothreonine modification is found at T917. The residue at position 920 (Y920) is a Phosphotyrosine. Position 931 is a phosphoserine (S931). Y972 carries the post-translational modification Phosphotyrosine. 2 disordered regions span residues 997–1021 (NPQI…NQSY) and 1075–1192 (QRQS…KSKV). Over residues 1075–1086 (QRQSSVSSTASV) the composition is skewed to polar residues. Phosphotyrosine is present on Y1104. The span at 1157–1171 (MSVSDFNYSRTSPSK) shows a compositional bias: polar residues. Phosphoserine is present on residues S1158, S1179, and S1286. Residues 1321-1410 (EIRVRVEKDP…TVELIIVREV (90 aa)) enclose the PDZ domain.

Belongs to the LAP (LRR and PDZ) protein family. As to quaternary structure, interacts with ERBB2, BPAG1 and ITGB4. May favor the localization of ERBB2, by restricting its presence to the basolateral membrane of epithelial cells. Also found to interact with ARVCF and delta catenin. Interacts (via C-terminus) with DST Isoform 3 (via N-terminus). Interacts with NOD2 (via CARD domain). Highly expressed in brain, heart, kidney, muscle and stomach, followed by liver, spleen and intestine.

It localises to the cell junction. The protein localises to the hemidesmosome. It is found in the nucleus membrane. Its subcellular location is the basolateral cell membrane. Acts as an adapter for the receptor ERBB2, in epithelia. By binding the unphosphorylated 'Tyr-1248' of receptor ERBB2, it may contribute to stabilize this unphosphorylated state. Inhibits NOD2-dependent NF-kappa-B signaling and pro-inflammatory cytokine secretion. The chain is Erbin from Homo sapiens (Human).